The chain runs to 275 residues: NH(3)-dependent NAD(+) synthetase (275 aa).

Residue 50–57 (GISGGVDS) participates in ATP binding. Position 56 (D56) interacts with Mg(2+). R147 contributes to the deamido-NAD(+) binding site. ATP is bound at residue T167. Position 172 (E172) interacts with Mg(2+). K180 and D187 together coordinate deamido-NAD(+). ATP-binding residues include K196 and T218. A deamido-NAD(+)-binding site is contributed by 267 to 268 (HK).

The protein belongs to the NAD synthetase family. As to quaternary structure, homodimer.

The catalysed reaction is deamido-NAD(+) + NH4(+) + ATP = AMP + diphosphate + NAD(+) + H(+). The protein operates within cofactor biosynthesis; NAD(+) biosynthesis; NAD(+) from deamido-NAD(+) (ammonia route): step 1/1. Functionally, catalyzes the ATP-dependent amidation of deamido-NAD to form NAD. Uses ammonia as a nitrogen source. The sequence is that of NH(3)-dependent NAD(+) synthetase from Pseudomonas aeruginosa (strain LESB58).